We begin with the raw amino-acid sequence, 186 residues long: Translation initiation factor IF-3 (186 aa).

It belongs to the IF-3 family. As to quaternary structure, monomer.

The protein localises to the cytoplasm. Functionally, IF-3 binds to the 30S ribosomal subunit and shifts the equilibrium between 70S ribosomes and their 50S and 30S subunits in favor of the free subunits, thus enhancing the availability of 30S subunits on which protein synthesis initiation begins. The chain is Translation initiation factor IF-3 from Borreliella afzelii (strain PKo) (Borrelia afzelii).